The following is a 330-amino-acid chain: Transcription factor TGA5 (330 aa).

Residues methionine 1–aspartate 13 show a composition bias toward polar residues. Residues methionine 1–arginine 64 form a disordered region. The segment covering serine 35–threonine 47 has biased composition (basic and acidic residues). The bZIP domain occupies aspartate 44–alanine 107. 2 coiled-coil regions span residues glutamine 45–serine 98 and glutamate 211–aspartate 244. A basic motif region spans residues lysine 46–lysine 66. Positions leucine 72–leucine 86 are leucine-zipper. Positions alanine 111–arginine 327 constitute a DOG1 domain.

This sequence belongs to the bZIP family. As to quaternary structure, binds DNA as a dimer. Interaction with the Dof domain protein OBP1 enhances the binding to the ocs element. Interacts with NPR1, NPR3 and NPR4. In terms of tissue distribution, predominantly expressed in roots.

The protein resides in the nucleus. Its function is as follows. Transcriptional activator that binds specifically to the DNA sequence 5'-TGACG-3'. Recognizes ocs elements like the as-1 motif of the cauliflower mosaic virus 35S promoter. Binding to the as-1-like cis elements mediate auxin- and salicylic acid-inducible transcription. May be involved in the induction of the systemic acquired resistance (SAR) via its interaction with NPR1. Could also bind to the Hex-motif (5'-TGACGTGG-3') another cis-acting element found in plant histone promoters. This is Transcription factor TGA5 (TGA5) from Arabidopsis thaliana (Mouse-ear cress).